We begin with the raw amino-acid sequence, 283 residues long: Probable aquaporin NIP4-2 (283 aa).

Met1 is modified (N-acetylmethionine). Residues 1–21 (MTSHGEEIEDEQISRIEKGNC) are compositionally biased toward basic and acidic residues. The tract at residues 1–23 (MTSHGEEIEDEQISRIEKGNCKD) is disordered. Transmembrane regions (helical) follow at residues 51–71 (GTYFIIFSGCGVVVVNVLYGG) and 77–97 (GICVTWGLIVMVMIYSTGHIS). The NPA 1 motif lies at 102 to 104 (NPA). 3 helical membrane-spanning segments follow: residues 120 to 140 (VPLYIGAQLTGSLLASLTLRL), 161 to 181 (ALVAEIIISFLLMFVISGVAT), and 189 to 209 (LAGIAVGMTIILNVFVAGPIS). Positions 214–216 (NPA) match the NPA 2 motif. The helical transmembrane segment at 231 to 251 (IWVYIVGPFVGIFAGGFVYNF) threads the bilayer. Ser267 is modified (phosphoserine).

Belongs to the MIP/aquaporin (TC 1.A.8) family. NIP (TC 1.A.8.12) subfamily.

It localises to the membrane. Functionally, aquaporins facilitate the transport of water and small neutral solutes across cell membranes. This chain is Probable aquaporin NIP4-2 (NIP4-2), found in Arabidopsis thaliana (Mouse-ear cress).